Here is a 251-residue protein sequence, read N- to C-terminus: Zinc import ATP-binding protein ZnuC (251 aa).

The 216-residue stretch at 5-220 (VSLENVSVSF…PEFISMFGPR (216 aa)) folds into the ABC transporter domain. An ATP-binding site is contributed by 37–44 (GPNGAGKS).

Belongs to the ABC transporter superfamily. Zinc importer (TC 3.A.1.15.5) family. In terms of assembly, the complex is composed of two ATP-binding proteins (ZnuC), two transmembrane proteins (ZnuB) and a solute-binding protein (ZnuA).

It is found in the cell inner membrane. The enzyme catalyses Zn(2+)(out) + ATP(in) + H2O(in) = Zn(2+)(in) + ADP(in) + phosphate(in) + H(+)(in). Its function is as follows. Part of the ABC transporter complex ZnuABC involved in zinc import. Responsible for energy coupling to the transport system. This is Zinc import ATP-binding protein ZnuC from Salmonella choleraesuis (strain SC-B67).